We begin with the raw amino-acid sequence, 173 residues long: Crossover junction endodeoxyribonuclease RuvC (173 aa).

Active-site residues include Asp8, Glu67, and Asp139. Residues Asp8, Glu67, and Asp139 each coordinate Mg(2+).

It belongs to the RuvC family. In terms of assembly, homodimer which binds Holliday junction (HJ) DNA. The HJ becomes 2-fold symmetrical on binding to RuvC with unstacked arms; it has a different conformation from HJ DNA in complex with RuvA. In the full resolvosome a probable DNA-RuvA(4)-RuvB(12)-RuvC(2) complex forms which resolves the HJ. It depends on Mg(2+) as a cofactor.

It is found in the cytoplasm. The catalysed reaction is Endonucleolytic cleavage at a junction such as a reciprocal single-stranded crossover between two homologous DNA duplexes (Holliday junction).. Functionally, the RuvA-RuvB-RuvC complex processes Holliday junction (HJ) DNA during genetic recombination and DNA repair. Endonuclease that resolves HJ intermediates. Cleaves cruciform DNA by making single-stranded nicks across the HJ at symmetrical positions within the homologous arms, yielding a 5'-phosphate and a 3'-hydroxyl group; requires a central core of homology in the junction. The consensus cleavage sequence is 5'-(A/T)TT(C/G)-3'. Cleavage occurs on the 3'-side of the TT dinucleotide at the point of strand exchange. HJ branch migration catalyzed by RuvA-RuvB allows RuvC to scan DNA until it finds its consensus sequence, where it cleaves and resolves the cruciform DNA. This chain is Crossover junction endodeoxyribonuclease RuvC, found in Klebsiella pneumoniae subsp. pneumoniae (strain ATCC 700721 / MGH 78578).